The sequence spans 1343 residues: DNA-directed RNA polymerase subunit beta (1343 aa).

The protein belongs to the RNA polymerase beta chain family. The RNAP catalytic core consists of 2 alpha, 1 beta, 1 beta' and 1 omega subunit. When a sigma factor is associated with the core the holoenzyme is formed, which can initiate transcription.

It catalyses the reaction RNA(n) + a ribonucleoside 5'-triphosphate = RNA(n+1) + diphosphate. Functionally, DNA-dependent RNA polymerase catalyzes the transcription of DNA into RNA using the four ribonucleoside triphosphates as substrates. This is DNA-directed RNA polymerase subunit beta from Haemophilus influenzae (strain PittGG).